The sequence spans 260 residues: Thrombin-like enzyme 2 (260 aa).

Residues M1 to A18 form the signal peptide. The propeptide occupies Q19–L24. Residues V25–A251 form the Peptidase S1 domain. Cystine bridges form between C31/C165, C52/C68, C102/C258, C144/C212, C176/C191, and C202/C227. The Charge relay system role is filled by H67. N105 carries an N-linked (GlcNAc...) asparagine glycan. D112 functions as the Charge relay system in the catalytic mechanism. 2 N-linked (GlcNAc...) asparagine glycosylation sites follow: N156 and N172. The active-site Charge relay system is the S206. N253 carries N-linked (GlcNAc...) asparagine glycosylation.

It belongs to the peptidase S1 family. Snake venom subfamily. As to quaternary structure, monomer. Expressed by the venom gland.

The protein resides in the secreted. Functionally, thrombin-like snake venom serine protease. The protein is Thrombin-like enzyme 2 of Trimeresurus albolabris (White-lipped pit viper).